The following is a 67-amino-acid chain: Protein AaeX (67 aa).

2 helical membrane-spanning segments follow: residues I9–F29 and P47–V67.

The protein belongs to the AaeX family.

It is found in the cell membrane. In Serratia marcescens, this protein is Protein AaeX.